The primary structure comprises 252 residues: F-box/SPRY domain-containing protein 1 (252 aa).

In terms of domain architecture, F-box spans 1–48 (MVDPLCNYNVLEAIFSYLELSDLSRCSQVCKSWYHFLNDENSDVWRWH). A B30.2/SPRY domain is found at 58–250 (IKSDLLASVT…VSMVYLGTPL (193 aa)).

This sequence belongs to the FBXO45/Fsn family. Component of an E3 ubiquitin ligase complex composed of hiw and Fsn.

It is found in the synapse. Its pathway is protein modification; protein ubiquitination. In terms of biological role, required in the presynaptic motoneuron to down-regulate the levels of wnd and restrain synaptic terminal growth at the neuromuscular junction (NMJ). The polypeptide is F-box/SPRY domain-containing protein 1 (Drosophila mojavensis (Fruit fly)).